Here is a 601-residue protein sequence, read N- to C-terminus: Glutathione-regulated potassium-efflux system protein KefB (601 aa).

13 consecutive transmembrane segments (helical) span residues 4-24 (ADLL…VPLA), 29-49 (IGAV…GLGF), 55-75 (EILH…GLEL), 87-107 (IFGV…GLLM), 111-131 (FLWQ…TAMA), 152-172 (VLLF…LLAG), 177-197 (HFDW…LIGG), 207-227 (FIAA…LVLS), 230-250 (LFMD…GVLL), 262-282 (AIDP…GMSL), 284-304 (LGVL…LVVI), 324-344 (MQFA…FSTA), and 356-376 (ALLL…MKGI). An RCK N-terminal domain is found at 400-519 (KPQVVVVGFG…AGVTQFSRET (120 aa)).

This sequence belongs to the monovalent cation:proton antiporter 2 (CPA2) transporter (TC 2.A.37) family. KefB subfamily. Interacts with the regulatory subunit KefG.

It is found in the cell inner membrane. Pore-forming subunit of a potassium efflux system that confers protection against electrophiles. Catalyzes K(+)/H(+) antiport. The chain is Glutathione-regulated potassium-efflux system protein KefB from Salmonella typhi.